The sequence spans 88 residues: Large ribosomal subunit protein bL27 (88 aa).

Residues 1–23 form a disordered region; sequence MAHKKGTGSTRNGRDSNAQRLGV. Residues 7-19 show a composition bias toward polar residues; sequence TGSTRNGRDSNAQ.

The protein belongs to the bacterial ribosomal protein bL27 family.

This Synechococcus elongatus (strain ATCC 33912 / PCC 7942 / FACHB-805) (Anacystis nidulans R2) protein is Large ribosomal subunit protein bL27 (rpmA).